The following is a 429-amino-acid chain: Protein ORF66 (429 aa).

This sequence belongs to the herpesviridae UL49 family. Interacts with ORF34.

It localises to the host nucleus. The protein resides in the host cytoplasm. Participates in the expression of late viral mRNAs. The chain is Protein ORF66 (ORF66) from Homo sapiens (Human).